The following is a 212-amino-acid chain: uncharacterized protein (212 aa).

Residues 11–31 form a helical membrane-spanning segment; that stretch reads NLIFFQFIVYFFFISLTILII.

Its subcellular location is the membrane. This is an uncharacterized protein from Rickettsia prowazekii (strain Madrid E).